The chain runs to 43 residues: Potassium channel toxin gamma-KTx 4.11 (43 aa).

Disulfide bonds link C5-C23, C11-C34, C20-C39, and C24-C41.

Belongs to the ergtoxin family. Gamma-KTx 4 subfamily. As to expression, expressed by the venom gland.

It localises to the secreted. Its function is as follows. Reversibly blocks Kv11/ERG potassium channels. The protein is Potassium channel toxin gamma-KTx 4.11 of Centruroides noxius (Mexican scorpion).